A 189-amino-acid polypeptide reads, in one-letter code: UPF0340 protein SAG0103 (189 aa).

The protein belongs to the UPF0340 family.

The polypeptide is UPF0340 protein SAG0103 (Streptococcus agalactiae serotype V (strain ATCC BAA-611 / 2603 V/R)).